The chain runs to 229 residues: Peptide methionine sulfoxide reductase B3, chloroplastic (229 aa).

A chloroplast-targeting transit peptide spans 1–71 (MGVQHLLKLR…NHNQWAASRC (71 aa)). A MsrB domain is found at 102 to 223 (EEEWEAILSP…NSISLKFIPA (122 aa)). The Zn(2+) site is built by Cys-141, Cys-144, Cys-187, and Cys-190. The cysteines at positions 159 and 212 are disulfide-linked. Catalysis depends on Cys-212, which acts as the Nucleophile.

The protein belongs to the MsrB Met sulfoxide reductase family. The cofactor is Zn(2+).

The protein resides in the plastid. It localises to the chloroplast. The enzyme catalyses L-methionyl-[protein] + [thioredoxin]-disulfide + H2O = L-methionyl-(R)-S-oxide-[protein] + [thioredoxin]-dithiol. Functionally, catalyzes the reduction of methionine sulfoxide (MetSO) to methionine in proteins. Plays a protective role against oxidative stress by restoring activity to proteins that have been inactivated by methionine oxidation. MSRB family specifically reduces the MetSO R-enantiomer. This Oryza sativa subsp. japonica (Rice) protein is Peptide methionine sulfoxide reductase B3, chloroplastic (MSRB3).